Consider the following 230-residue polypeptide: Ethylene-responsive transcription factor ERF012 (230 aa).

A compositionally biased stretch (basic and acidic residues) spans 1–17; sequence MVKQERKIQTSSTKKEM. The segment at 1 to 51 is disordered; sequence MVKQERKIQTSSTKKEMPLSSSPSSSSSSSSSSSSSSCKNKNKKSKIKKYK. Low complexity predominate over residues 20–39; that stretch reads SSSPSSSSSSSSSSSSSSCK. Residues 40-51 show a composition bias toward basic residues; sequence NKNKKSKIKKYK. The segment at residues 49–106 is a DNA-binding region (AP2/ERF); sequence KYKGVRMRSWGSWVSEIRAPNQKTRIWLGSYSTAEAAARAYDVALLCLKGPQANLNFP.

The protein belongs to the AP2/ERF transcription factor family. ERF subfamily. As to expression, expressed cotyledons, ovules and seeds of immature siliques.

It is found in the nucleus. In terms of biological role, transcriptional activator involved in the regulation of plant development and tolerance to abiotic stresses. Involved in salt and osmotic stress response pathways. May be regulated by the stress-related genes RD29A, RD22, DREB1A or P5CS during stress response. Binds to the GCC-box pathogenesis-related promoter element. May be involved in the regulation of gene expression by stress factors and by components of stress signal transduction pathways. The chain is Ethylene-responsive transcription factor ERF012 (ERF012) from Arabidopsis thaliana (Mouse-ear cress).